Reading from the N-terminus, the 178-residue chain is Ribulose bisphosphate carboxylase small subunit, chloroplastic (178 aa).

The transit peptide at 1 to 54 (MASISSSVATVSRTAPAQANMVAPFTGLKSNAAFPTTKKANDFSTLPSNGGRVQ) directs the protein to the chloroplast.

It belongs to the RuBisCO small chain family. In terms of assembly, heterohexadecamer of 8 large and 8 small subunits.

Its subcellular location is the plastid. The protein localises to the chloroplast. In terms of biological role, ruBisCO catalyzes two reactions: the carboxylation of D-ribulose 1,5-bisphosphate, the primary event in carbon dioxide fixation, as well as the oxidative fragmentation of the pentose substrate. Both reactions occur simultaneously and in competition at the same active site. Although the small subunit is not catalytic it is essential for maximal activity. This Helianthus annuus (Common sunflower) protein is Ribulose bisphosphate carboxylase small subunit, chloroplastic.